A 177-amino-acid polypeptide reads, in one-letter code: Large ribosomal subunit protein uL6 (177 aa).

Basic and acidic residues predominate over residues 157–171 (YKGKGVRYSDENVRR). The disordered stretch occupies residues 157–177 (YKGKGVRYSDENVRRKEAKKK).

The protein belongs to the universal ribosomal protein uL6 family. In terms of assembly, part of the 50S ribosomal subunit.

Functionally, this protein binds to the 23S rRNA, and is important in its secondary structure. It is located near the subunit interface in the base of the L7/L12 stalk, and near the tRNA binding site of the peptidyltransferase center. The protein is Large ribosomal subunit protein uL6 of Pseudoalteromonas translucida (strain TAC 125).